The sequence spans 99 residues: Large ribosomal subunit protein uL23 (99 aa).

The protein belongs to the universal ribosomal protein uL23 family. Part of the 50S ribosomal subunit. Contacts protein L29, and trigger factor when it is bound to the ribosome.

In terms of biological role, one of the early assembly proteins it binds 23S rRNA. One of the proteins that surrounds the polypeptide exit tunnel on the outside of the ribosome. Forms the main docking site for trigger factor binding to the ribosome. The sequence is that of Large ribosomal subunit protein uL23 from Alkalilimnicola ehrlichii (strain ATCC BAA-1101 / DSM 17681 / MLHE-1).